The sequence spans 109 residues: Small ribosomal subunit protein bS6 (109 aa).

The protein belongs to the bacterial ribosomal protein bS6 family.

Functionally, binds together with bS18 to 16S ribosomal RNA. The chain is Small ribosomal subunit protein bS6 from Anaplasma marginale (strain St. Maries).